A 556-amino-acid polypeptide reads, in one-letter code: Jerky protein homolog (556 aa).

The HTH psq-type domain maps to 11–62; the sequence is RGEKRKRVVLTLKEKIDICTRLEKGESRKALMQEYNVGMSTLYDIRAHKAQL. DNA-binding regions (H-T-H motif) lie at residues 38–58 and 110–142; these read RKAL…IRAH and PMLI…FKAR. The region spanning 77-149 is the HTH CENPB-type domain; sequence QRRTLHTPKL…KARHGIKKLD (73 aa). Positions 213 to 382 constitute a DDE-1 domain; sequence KDRLTVLMCA…VPSHVFRRAW (170 aa). S414 is subject to Phosphoserine. The segment at 439–482 is disordered; sequence SWGVAGREAEGGRPPAATSPAEVVWSSEKTPKADQDGRGDPGEG. The span at 467 to 479 shows a compositional bias: basic and acidic residues; that stretch reads KTPKADQDGRGDP.

The protein belongs to the tigger transposable element derived protein family. Expressed ubiquitously.

The protein localises to the nucleus. May bind DNA. The sequence is that of Jerky protein homolog from Homo sapiens (Human).